We begin with the raw amino-acid sequence, 184 residues long: dTTP/UTP pyrophosphatase (184 aa).

The Proton acceptor role is filled by Asp-67.

The protein belongs to the Maf family. YhdE subfamily. Requires a divalent metal cation as cofactor.

Its subcellular location is the cytoplasm. It carries out the reaction dTTP + H2O = dTMP + diphosphate + H(+). The enzyme catalyses UTP + H2O = UMP + diphosphate + H(+). Nucleoside triphosphate pyrophosphatase that hydrolyzes dTTP and UTP. May have a dual role in cell division arrest and in preventing the incorporation of modified nucleotides into cellular nucleic acids. The sequence is that of dTTP/UTP pyrophosphatase from Elusimicrobium minutum (strain Pei191).